A 31-amino-acid polypeptide reads, in one-letter code: U1-theraphotoxin-Cv1a (31 aa).

3 disulfide bridges follow: Cys-2/Cys-16, Cys-9/Cys-21, and Cys-15/Cys-28.

In terms of tissue distribution, expressed by the venom gland.

It is found in the secreted. Its function is as follows. Insecticidal toxin that induces reversible paralysis in crickets but not in cockroaches and mice. Molecular target unknown. This chain is U1-theraphotoxin-Cv1a, found in Coremiocnemis valida (Singapore tarantula).